Here is a 423-residue protein sequence, read N- to C-terminus: 4-hydroxy-3-methylbut-2-en-1-yl diphosphate synthase (flavodoxin) (423 aa).

Residues C307, C310, C353, and E360 each contribute to the [4Fe-4S] cluster site.

This sequence belongs to the IspG family. Requires [4Fe-4S] cluster as cofactor.

The catalysed reaction is (2E)-4-hydroxy-3-methylbut-2-enyl diphosphate + oxidized [flavodoxin] + H2O + 2 H(+) = 2-C-methyl-D-erythritol 2,4-cyclic diphosphate + reduced [flavodoxin]. It participates in isoprenoid biosynthesis; isopentenyl diphosphate biosynthesis via DXP pathway; isopentenyl diphosphate from 1-deoxy-D-xylulose 5-phosphate: step 5/6. Functionally, converts 2C-methyl-D-erythritol 2,4-cyclodiphosphate (ME-2,4cPP) into 1-hydroxy-2-methyl-2-(E)-butenyl 4-diphosphate. The chain is 4-hydroxy-3-methylbut-2-en-1-yl diphosphate synthase (flavodoxin) from Brucella anthropi (strain ATCC 49188 / DSM 6882 / CCUG 24695 / JCM 21032 / LMG 3331 / NBRC 15819 / NCTC 12168 / Alc 37) (Ochrobactrum anthropi).